We begin with the raw amino-acid sequence, 805 residues long: Leucine--tRNA ligase (805 aa).

The 'HIGH' region signature appears at 40–51; it reads PYPSGQGLHVGH. Positions 576 to 580 match the 'KMSKS' region motif; it reads KMSKS. ATP is bound at residue lysine 579.

Belongs to the class-I aminoacyl-tRNA synthetase family.

It localises to the cytoplasm. The enzyme catalyses tRNA(Leu) + L-leucine + ATP = L-leucyl-tRNA(Leu) + AMP + diphosphate. The chain is Leucine--tRNA ligase from Ligilactobacillus salivarius (strain UCC118) (Lactobacillus salivarius).